Reading from the N-terminus, the 469-residue chain is Glutamate--tRNA ligase (469 aa).

The short motif at Pro-9–Gly-19 is the 'HIGH' region element. Residues Cys-98, Cys-100, Cys-125, and Asp-127 each contribute to the Zn(2+) site. A 'KMSKS' region motif is present at residues Lys-237 to Arg-241. Lys-240 provides a ligand contact to ATP.

This sequence belongs to the class-I aminoacyl-tRNA synthetase family. Glutamate--tRNA ligase type 1 subfamily. As to quaternary structure, monomer. The cofactor is Zn(2+).

The protein resides in the cytoplasm. The enzyme catalyses tRNA(Glu) + L-glutamate + ATP = L-glutamyl-tRNA(Glu) + AMP + diphosphate. In terms of biological role, catalyzes the attachment of glutamate to tRNA(Glu) in a two-step reaction: glutamate is first activated by ATP to form Glu-AMP and then transferred to the acceptor end of tRNA(Glu). The sequence is that of Glutamate--tRNA ligase from Serratia proteamaculans (strain 568).